Here is a 478-residue protein sequence, read N- to C-terminus: Odorant receptor coreceptor (478 aa).

The Cytoplasmic portion of the chain corresponds to 1–43 (MNVQPTKYHGLVLDLMPNIRLMQGFGHFLFRYVNGPVLIRKLY). The helical transmembrane segment at 44–64 (SWWNLIMILLQYFAIMGNLVM) threads the bilayer. Residues 65–73 (NTGDVNELT) lie on the Extracellular side of the membrane. Residues 74 to 94 (ANTITTLFFTHSVTKFIYVAV) traverse the membrane as a helical segment. Over 95-133 (NSEHFYRTLGIWNQPNSHSLFAESDARYHSIALAKMRKL) the chain is Cytoplasmic. A helical transmembrane segment spans residues 134–154 (LVMVMVTTVLSVVAWITITFF). Residues 155 to 187 (GDSVKNVFDKETNETYTVEIPRLPIKAWYPWDA) are Extracellular-facing. Residue asparagine 167 is glycosylated (N-linked (GlcNAc...) asparagine). A helical membrane pass occupies residues 188–208 (MSGVPYFFSFIYQAYFLLFSM). Residues 209 to 343 (CQANLADVMF…VERHKHVVRL (135 aa)) lie on the Cytoplasmic side of the membrane. The chain crosses the membrane as a helical span at residues 344-364 (VSAIGETYGAALLLHMLTSTI). Residues 365 to 382 (KLTLLAYQATKIDALNVY) are Extracellular-facing. The chain crosses the membrane as a helical span at residues 383 to 403 (GLTVIGYLVYALAQVFLFCIF). Over 404-454 (GNRLIEESSSVMEAAYSCHWYDGSEEAKTFVQIVCQQCQKAMTISGAKFFT) the chain is Cytoplasmic. A helical transmembrane segment spans residues 455 to 475 (VSLDLFASVLGAVVTYFMVLV). At 476–478 (QLK) the chain is on the extracellular side.

Belongs to the insect chemoreceptor superfamily. Heteromeric odorant receptor channel (TC 1.A.69) family. Orco subfamily. Heterodimer with conventional odorant receptors (ORs). Complexes exist early in the endomembrane system in olfactory sensory neurons (OSNs), coupling these complexes to the conserved ciliary trafficking pathway. In terms of tissue distribution, found specifically within most antennal and maxillary palp sensilla, as well as in a subset of proboscis sensilla.

The protein resides in the cell membrane. Functionally, odorant coreceptor which complexes with conventional odorant receptors (ORs) to form odorant-sensing units, providing sensitive and prolonged odorant signaling and calcium permeability. Orco is a universal and integral part of the functional odorant receptor, involved in the dendritic localization of other olfactory receptors. Plays a key role in preferred attraction of females for humans over non-human hosts for blood feeding. Human attraction plays a crucial role in the transmission of dengue and yellow fever by the mosquito. Also required for the response to the insect repellent IR3535; or to N,N-Diethyl-meta-toluamide (DEET), the most widely used insect repellent worldwide. In Aedes aegypti (Yellowfever mosquito), this protein is Odorant receptor coreceptor (SGPRor7).